A 464-amino-acid chain; its full sequence is Protein FAM90A9 (464 aa).

Disordered regions lie at residues methionine 1–leucine 42, proline 70–alanine 389, and alanine 411–proline 437. Basic and acidic residues-rich tracts occupy residues glycine 74–valine 89 and asparagine 97–arginine 114. Low complexity predominate over residues leucine 180–leucine 197.

This sequence belongs to the FAM90 family.

The sequence is that of Protein FAM90A9 (FAM90A9) from Homo sapiens (Human).